A 405-amino-acid chain; its full sequence is Diaminohydroxyphosphoribosylamino-pyrimidine deaminase (405 aa).

In terms of domain architecture, CMP/dCMP-type deaminase spans 256–383; sequence YNHEEYMLKA…DLLKKAGIVV (128 aa). Zn(2+) is bound at residue His-305. Glu-307 acts as the Proton donor in catalysis. The Zn(2+) site is built by Cys-335 and Cys-345.

Belongs to the cytidine and deoxycytidylate deaminase family. Zn(2+) is required as a cofactor.

The protein localises to the cytoplasm. The protein resides in the nucleus. It carries out the reaction 2,5-diamino-6-hydroxy-4-(5-phosphoribosylamino)-pyrimidine + H2O + H(+) = 5-amino-6-(5-phospho-D-ribosylamino)uracil + NH4(+). The protein operates within cofactor biosynthesis; riboflavin biosynthesis; 5-amino-6-(D-ribitylamino)uracil from GTP: step 2/4. Involved in riboflavin biosynthesis. Converts 2,5-diamino-6-(ribosylamino)-4(3H)-pyrimidinone 5'-phosphate into 5-amino-6-(ribosylamino)-2,4(1H,3H)-pyrimidinedione 5'-phosphate. The chain is Diaminohydroxyphosphoribosylamino-pyrimidine deaminase from Schizosaccharomyces pombe (strain 972 / ATCC 24843) (Fission yeast).